A 170-amino-acid chain; its full sequence is Cathelicidin antimicrobial peptide (170 aa).

A signal peptide spans 1–30; sequence MKTQRDGHSLGWWSLVLLLLGLVMPLAIIA. Residues 31–131 constitute a propeptide, cathelin-like domain (CLD); it reads QVLSYKEAVL…DISCDKDNKR (101 aa). Disulfide bonds link cysteine 86/cysteine 97 and cysteine 108/cysteine 125. The interval 150–162 is active core; the sequence is SKRIVQRIKDFLR.

It belongs to the cathelicidin family. Monomer, homodimer or homotrimer (in vitro). Oligomerizes as tetra- or hexamer in solution (in vitro). Proteolytically cleaved by proteinase PRTN3 into antibacterial peptide LL-37. Proteolytically cleaved by cathepsin CTSG and neutrophil elastase ELANE. Post-translationally, resistant to proteolytic degradation in solution, and when bound to both zwitterionic (mimicking mammalian membranes) and negatively charged membranes (mimicking bacterial membranes). In terms of processing, after secretion onto the skin surface, the CAMP gene product is processed by a serine protease-dependent mechanism into multiple novel antimicrobial peptides distinct from and shorter than cathelicidin LL-37. These peptides show enhanced antimicrobial action, acquiring the ability to kill skin pathogens such as S.aureus, E.coli and C.albicans. These peptides have lost the ability to stimulate CXCL8/IL8 release from keratinocytes. The peptides act synergistically, killing bacteria at lower concentrations when present together, and maintain activity at increased salt condition.

It is found in the secreted. It localises to the vesicle. In terms of biological role, antimicrobial protein that is an integral component of the innate immune system. Binds to bacterial lipopolysaccharides (LPS). Acts via neutrophil N-formyl peptide receptors to enhance the release of CXCL2. Postsecretory processing generates multiple cathelicidin antimicrobial peptides with various lengths which act as a topical antimicrobial defense in sweat on skin. The unprocessed precursor form, cathelicidin antimicrobial peptide, inhibits the growth of Gram-negative E.coli and E.aerogenes with efficiencies comparable to that of the mature peptide LL-37 (in vitro). Its function is as follows. Antimicrobial peptide that is an integral component of the innate immune system. Binds to bacterial lipopolysaccharides (LPS). Causes membrane permeabilization by forming transmembrane pores (in vitro). Causes lysis of E.coli. Exhibits antimicrobial activity against Gram-negative bacteria such as P.aeruginosa, S.typhimurium, E.aerogenes, E.coli and P.syringae, Gram-positive bacteria such as L.monocytogenes, S.epidermidis, S.pyogenes and S.aureus, as well as vancomycin-resistant enterococci (in vitro). Exhibits antimicrobial activity against methicillin-resistant S.aureus, P.mirabilis, and C.albicans in low-salt media, but not in media containing 100 mM NaCl (in vitro). Forms chiral supramolecular assemblies with quinolone signal (PQS) molecules of P.aeruginosa, which may lead to interference of bacterial quorum signaling and perturbance of bacterial biofilm formation. May form supramolecular fiber-like assemblies on bacterial membranes. Induces cytokine and chemokine producation as well as TNF/TNFA and CSF2/GMCSF production in normal human keratinocytes. Exhibits hemolytic activity against red blood cells. Exhibits antimicrobial activity against E.coli and B.megaterium (in vitro). This is Cathelicidin antimicrobial peptide from Gorilla gorilla gorilla (Western lowland gorilla).